The primary structure comprises 351 residues: Ferrochelatase (351 aa).

Fe cation contacts are provided by His-220 and Glu-301.

It belongs to the ferrochelatase family.

It localises to the cytoplasm. The enzyme catalyses heme b + 2 H(+) = protoporphyrin IX + Fe(2+). It functions in the pathway porphyrin-containing compound metabolism; protoheme biosynthesis; protoheme from protoporphyrin-IX: step 1/1. Functionally, catalyzes the ferrous insertion into protoporphyrin IX. In Rhodobacter capsulatus (Rhodopseudomonas capsulata), this protein is Ferrochelatase.